The chain runs to 632 residues: 2-oxoacid:ferredoxin oxidoreductase subunit alpha (632 aa).

A YPITP motif motif is present at residues 254–258 (YPITP). Positions 257 and 345 each coordinate substrate.

Heterodimer composed of an alpha and a beta subunit.

It catalyses the reaction a 2-oxocarboxylate + 2 oxidized [2Fe-2S]-[ferredoxin] + CoA = an acyl-CoA + 2 reduced [2Fe-2S]-[ferredoxin] + CO2 + H(+). Its function is as follows. Catalyzes the coenzyme A-dependent oxidative decarboxylation of different 2-oxoacids such as 2-oxoglutarate, pyruvate and 2-oxobutyrate to form their CoA derivatives. This Saccharolobus solfataricus (Sulfolobus solfataricus) protein is 2-oxoacid:ferredoxin oxidoreductase subunit alpha.